The chain runs to 679 residues: MSKNLLIELGLEELPAYVVTPSEKQLGERLATFLTENRLSFEDIQTFSTPRRLAVRVSGLADQQTDLTEDFKGPAKKIALDADGNFSKAAQGFVRGKGLTTDAIEFREVKGEEYVYVTKHEAGKPAKEVLLGVTEVLSAMTFPVSMHWANNSFEYIRPVHTLTVLLNDEALELDFLDIHSGCVSRGHRFLGTETTITSADSYEADLRSQCVIVDAKERQEMIVEQIKTLEVEQGVQVDIDENLLNEVLNLVEFPTAFMGSFEAKYLDIPEEVLVTSMKNHQRYFVVRDQAGHLMPNFVSVRNGNDQAIENVIKGNEKVLVARLEDGEFFWREDQKLQIADLVAKLTNVTFHEKIGSLAEHMDRTRVIAASLAKEANLSAEEVTAVDRAAQIYKFDLLTGMVGEFDELQGIMGEKYALLAGEDAAVATAIREHYLPDAAGGALPETKVGAVLALADKLDTLLSFFSVGLIPSGSNDPYALRRATQGIVRILDHFGWRIPMDKLVDSLYDLSFDSLTYTNKADVMNFIRARVDKMMGKAAPKDIREAILASSTFVVPEMLAVAEALVKASHTENYKPAVESLSRAFNLAEKADASVQVDPSLFENEQENTLFAAIQGLTLAGSAAQQLEQVFALSPVINDFFDNTMVMAEDQALKNNRLAILSDLVSKAKTIAAFNQLNTK.

This sequence belongs to the class-II aminoacyl-tRNA synthetase family. Tetramer of two alpha and two beta subunits.

Its subcellular location is the cytoplasm. It catalyses the reaction tRNA(Gly) + glycine + ATP = glycyl-tRNA(Gly) + AMP + diphosphate. The chain is Glycine--tRNA ligase beta subunit from Streptococcus pyogenes serotype M2 (strain MGAS10270).